Consider the following 715-residue polypeptide: 1,4-alpha-glucan branching enzyme GlgB (715 aa).

Residue D396 is the Nucleophile of the active site. Catalysis depends on E449, which acts as the Proton donor.

This sequence belongs to the glycosyl hydrolase 13 family. GlgB subfamily. In terms of assembly, monomer.

The catalysed reaction is Transfers a segment of a (1-&gt;4)-alpha-D-glucan chain to a primary hydroxy group in a similar glucan chain.. It functions in the pathway glycan biosynthesis; glycogen biosynthesis. Catalyzes the formation of the alpha-1,6-glucosidic linkages in glycogen by scission of a 1,4-alpha-linked oligosaccharide from growing alpha-1,4-glucan chains and the subsequent attachment of the oligosaccharide to the alpha-1,6 position. This chain is 1,4-alpha-glucan branching enzyme GlgB, found in Vibrio vulnificus (strain CMCP6).